Here is a 180-residue protein sequence, read N- to C-terminus: Endoribonuclease YbeY (180 aa).

Zn(2+)-binding residues include His-118, His-122, and His-128.

Belongs to the endoribonuclease YbeY family. Zn(2+) serves as cofactor.

It is found in the cytoplasm. In terms of biological role, single strand-specific metallo-endoribonuclease involved in late-stage 70S ribosome quality control and in maturation of the 3' terminus of the 16S rRNA. The protein is Endoribonuclease YbeY of Rhodococcus jostii (strain RHA1).